The chain runs to 584 residues: Probable pectinesterase/pectinesterase inhibitor (584 aa).

An N-terminal signal peptide occupies residues 1-22 (MAVGKIVISVASMLLVVGVAIG). Residues 40–191 (NSHQKAVESL…KILSSNAIDI (152 aa)) are pectinesterase inhibitor. Asn-91 and Asn-105 each carry an N-linked (GlcNAc...) asparagine glycan. A disordered region spans residues 246–267 (AQAGRPGAPADEGIGEGGGGGG). Positions 272–571 (THVVAKDGSG…TVANWLTPAN (300 aa)) are pectinesterase. Positions 349 and 379 each coordinate substrate. Catalysis depends on Asp-402, which acts as the Proton donor; for pectinesterase activity. Asp-423 serves as the catalytic Nucleophile; for pectinesterase activity. Residues Arg-492 and Trp-494 each coordinate substrate.

The protein in the N-terminal section; belongs to the PMEI family. This sequence in the C-terminal section; belongs to the pectinesterase family. Pollen, and at much lower levels in pistils and petals.

Its subcellular location is the secreted. It is found in the cell wall. The catalysed reaction is [(1-&gt;4)-alpha-D-galacturonosyl methyl ester](n) + n H2O = [(1-&gt;4)-alpha-D-galacturonosyl](n) + n methanol + n H(+). Its pathway is glycan metabolism; pectin degradation; 2-dehydro-3-deoxy-D-gluconate from pectin: step 1/5. Acts in the modification of cell walls via demethylesterification of cell wall pectin. In Brassica napus (Rape), this protein is Probable pectinesterase/pectinesterase inhibitor (BP19).